The sequence spans 274 residues: 4-hydroxy-tetrahydrodipicolinate reductase (274 aa).

An NAD(+)-binding site is contributed by 12–17 (GAAGRM). Arg-39 provides a ligand contact to NADP(+). Residues 102-104 (GTT) and 126-129 (SGNM) contribute to the NAD(+) site. His-160 (proton donor/acceptor) is an active-site residue. His-161 contacts (S)-2,3,4,5-tetrahydrodipicolinate. Lys-164 acts as the Proton donor in catalysis. Residue 170–171 (GT) coordinates (S)-2,3,4,5-tetrahydrodipicolinate.

Belongs to the DapB family.

It is found in the cytoplasm. It carries out the reaction (S)-2,3,4,5-tetrahydrodipicolinate + NAD(+) + H2O = (2S,4S)-4-hydroxy-2,3,4,5-tetrahydrodipicolinate + NADH + H(+). It catalyses the reaction (S)-2,3,4,5-tetrahydrodipicolinate + NADP(+) + H2O = (2S,4S)-4-hydroxy-2,3,4,5-tetrahydrodipicolinate + NADPH + H(+). Its pathway is amino-acid biosynthesis; L-lysine biosynthesis via DAP pathway; (S)-tetrahydrodipicolinate from L-aspartate: step 4/4. In terms of biological role, catalyzes the conversion of 4-hydroxy-tetrahydrodipicolinate (HTPA) to tetrahydrodipicolinate. The protein is 4-hydroxy-tetrahydrodipicolinate reductase of Rhizobium rhizogenes (strain K84 / ATCC BAA-868) (Agrobacterium radiobacter).